The primary structure comprises 231 residues: DNA mismatch repair protein MutH (231 aa).

This sequence belongs to the MutH family.

Its subcellular location is the cytoplasm. In terms of biological role, sequence-specific endonuclease that cleaves unmethylated GATC sequences. It is involved in DNA mismatch repair. The chain is DNA mismatch repair protein MutH from Salmonella paratyphi C (strain RKS4594).